The chain runs to 898 residues: Translation initiation factor IF-2 (898 aa).

Residues 51 to 302 (KEHGDATGSE…RKGRINKPMS (252 aa)) form a disordered region. Basic and acidic residues-rich tracts occupy residues 100–164 (SSVE…KRET) and 171–230 (RSDE…KETV). Over residues 234 to 245 (QENTDYHVTTSR) the composition is skewed to polar residues. Residues 263-273 (RRSTKANKRKM) show a composition bias toward basic residues. Positions 274–286 (SSRDDNQERDSRP) are enriched in basic and acidic residues. Residues 287–297 (RGGKAGRKGRI) show a composition bias toward basic residues. The 170-residue stretch at 397 to 566 (SRAPVVTIMG…LLQAEVLELK (170 aa)) folds into the tr-type G domain. A G1 region spans residues 406 to 413 (GHVDHGKT). 406–413 (GHVDHGKT) contributes to the GTP binding site. The segment at 431–435 (GITQH) is G2. The tract at residues 452–455 (DTPG) is G3. GTP-binding positions include 452–456 (DTPGH) and 506–509 (NKID). Positions 506–509 (NKID) are G4. Residues 542–544 (SAK) are G5.

Belongs to the TRAFAC class translation factor GTPase superfamily. Classic translation factor GTPase family. IF-2 subfamily.

It is found in the cytoplasm. Its function is as follows. One of the essential components for the initiation of protein synthesis. Protects formylmethionyl-tRNA from spontaneous hydrolysis and promotes its binding to the 30S ribosomal subunits. Also involved in the hydrolysis of GTP during the formation of the 70S ribosomal complex. The chain is Translation initiation factor IF-2 from Vibrio cholerae serotype O1 (strain ATCC 39541 / Classical Ogawa 395 / O395).